The primary structure comprises 289 residues: Shikimate dehydrogenase (NADP(+)) (289 aa).

Residues 20–22 (SIS) and Ser-67 each bind shikimate. Lys-71 (proton acceptor) is an active-site residue. Residue Asp-83 coordinates NADP(+). Shikimate is bound by residues Asn-92 and Asp-107. NADP(+)-binding positions include 132 to 136 (GGGGA) and Val-230. Tyr-232 contributes to the shikimate binding site. Gly-253 serves as a coordination point for NADP(+).

Belongs to the shikimate dehydrogenase family. As to quaternary structure, homodimer.

The catalysed reaction is shikimate + NADP(+) = 3-dehydroshikimate + NADPH + H(+). It participates in metabolic intermediate biosynthesis; chorismate biosynthesis; chorismate from D-erythrose 4-phosphate and phosphoenolpyruvate: step 4/7. Functionally, involved in the biosynthesis of the chorismate, which leads to the biosynthesis of aromatic amino acids. Catalyzes the reversible NADPH linked reduction of 3-dehydroshikimate (DHSA) to yield shikimate (SA). The polypeptide is Shikimate dehydrogenase (NADP(+)) (Streptococcus suis (strain 98HAH33)).